Consider the following 115-residue polypeptide: NADH-ubiquinone oxidoreductase chain 3 (115 aa).

Transmembrane regions (helical) follow at residues 4–24 (ILTL…AFWL), 55–75 (FFLV…LLPL), and 84–104 (SYLT…GLAY).

This sequence belongs to the complex I subunit 3 family. As to quaternary structure, core subunit of respiratory chain NADH dehydrogenase (Complex I) which is composed of 45 different subunits. Interacts with TMEM186. Interacts with TMEM242.

It is found in the mitochondrion inner membrane. It carries out the reaction a ubiquinone + NADH + 5 H(+)(in) = a ubiquinol + NAD(+) + 4 H(+)(out). Functionally, core subunit of the mitochondrial membrane respiratory chain NADH dehydrogenase (Complex I) which catalyzes electron transfer from NADH through the respiratory chain, using ubiquinone as an electron acceptor. Essential for the catalytic activity of complex I. This chain is NADH-ubiquinone oxidoreductase chain 3, found in Necromys lactens (Rufous-bellied bolo mouse).